We begin with the raw amino-acid sequence, 366 residues long: MSGNTLGTLFTVTTFGESHGPAIGCVIDGCPPGLALNEADIQLELDRRKPGTSRHVTQRQEEDKVEILSGVFEGQTTGAPIALLIRNTDQRSKDYGNIADTFRPGHADYTYWQKYGIRDYRGGGRSSARLTAPTVAAGAVAKKWLREKFGTEIRGYMAALGEIDVPFVDWAHVRENPFFVPNQQIVPQLEAYMDALRKEGDSIGARINVVASGVPVGLGEPLFDRLDADIAHAMMGINAVKGVEIGAGFASVAQRGSVHGDELTPEGFVGNHAGGVLGGISTGQDITVSIAIKPTSSIRTPRRSIDKAGQPAVVETFGRHDPCVGIRATPIAESMLALVLIDHALRHRAQCGDVSVSTPKIAASAP.

The NADP(+) site is built by Arg-48 and Arg-54. FMN contacts are provided by residues 125 to 127 (RSS), 238 to 239 (NA), Gly-278, 293 to 297 (KPTSS), and Arg-319.

It belongs to the chorismate synthase family. Homotetramer. FMNH2 serves as cofactor.

It carries out the reaction 5-O-(1-carboxyvinyl)-3-phosphoshikimate = chorismate + phosphate. It participates in metabolic intermediate biosynthesis; chorismate biosynthesis; chorismate from D-erythrose 4-phosphate and phosphoenolpyruvate: step 7/7. In terms of biological role, catalyzes the anti-1,4-elimination of the C-3 phosphate and the C-6 proR hydrogen from 5-enolpyruvylshikimate-3-phosphate (EPSP) to yield chorismate, which is the branch point compound that serves as the starting substrate for the three terminal pathways of aromatic amino acid biosynthesis. This reaction introduces a second double bond into the aromatic ring system. This is Chorismate synthase from Paraburkholderia xenovorans (strain LB400).